The chain runs to 1654 residues: Mediator of RNA polymerase II transcription subunit 12 (1654 aa).

2 disordered regions span residues 52-72 and 1481-1530; these read DLNG…LSGN and SKQT…SFQT. Residues 1515 to 1530 are compositionally biased toward polar residues; it reads PLSSARPSSEAASFQT.

It belongs to the Mediator complex subunit 12 family. In terms of assembly, component of the SRB8-11 complex, which itself associates with the Mediator complex.

The protein resides in the nucleus. Its function is as follows. Component of the SRB8-11 complex. The SRB8-11 complex is a regulatory module of the Mediator complex which is itself involved in regulation of basal and activated RNA polymerase II-dependent transcription. The SRB8-11 complex may be involved in the transcriptional repression of a subset of genes regulated by Mediator. It may inhibit the association of the Mediator complex with RNA polymerase II to form the holoenzyme complex. This chain is Mediator of RNA polymerase II transcription subunit 12 (SRB8), found in Scheffersomyces stipitis (strain ATCC 58785 / CBS 6054 / NBRC 10063 / NRRL Y-11545) (Yeast).